Here is a 220-residue protein sequence, read N- to C-terminus: Sec-independent protein translocase protein TatB (220 aa).

The chain crosses the membrane as a helical span at residues 1–21; the sequence is MFDIGFSELLLVLVIGLVVLG. Residues 190–220 are disordered; the sequence is VTKQQIDTIDSHGTDLSSAGPSRIHQPGGDQ.

Belongs to the TatB family. The Tat system comprises two distinct complexes: a TatABC complex, containing multiple copies of TatA, TatB and TatC subunits, and a separate TatA complex, containing only TatA subunits. Substrates initially bind to the TatABC complex, which probably triggers association of the separate TatA complex to form the active translocon.

The protein localises to the cell inner membrane. Part of the twin-arginine translocation (Tat) system that transports large folded proteins containing a characteristic twin-arginine motif in their signal peptide across membranes. Together with TatC, TatB is part of a receptor directly interacting with Tat signal peptides. TatB may form an oligomeric binding site that transiently accommodates folded Tat precursor proteins before their translocation. The sequence is that of Sec-independent protein translocase protein TatB from Yersinia pseudotuberculosis serotype I (strain IP32953).